The following is a 276-amino-acid chain: 4-hydroxy-3-methylbut-2-enyl diphosphate reductase (276 aa).

Cysteine 12 serves as a coordination point for [4Fe-4S] cluster. (2E)-4-hydroxy-3-methylbut-2-enyl diphosphate-binding residues include histidine 36 and histidine 71. Residues histidine 36 and histidine 71 each contribute to the dimethylallyl diphosphate site. Residues histidine 36 and histidine 71 each coordinate isopentenyl diphosphate. Cysteine 93 contacts [4Fe-4S] cluster. Histidine 121 contacts (2E)-4-hydroxy-3-methylbut-2-enyl diphosphate. Histidine 121 lines the dimethylallyl diphosphate pocket. An isopentenyl diphosphate-binding site is contributed by histidine 121. The active-site Proton donor is the glutamate 123. Threonine 160 serves as a coordination point for (2E)-4-hydroxy-3-methylbut-2-enyl diphosphate. Cysteine 188 is a binding site for [4Fe-4S] cluster. Positions 216, 217, 218, and 259 each coordinate (2E)-4-hydroxy-3-methylbut-2-enyl diphosphate. Dimethylallyl diphosphate contacts are provided by serine 216, serine 217, asparagine 218, and serine 259. Residues serine 216, serine 217, asparagine 218, and serine 259 each contribute to the isopentenyl diphosphate site.

This sequence belongs to the IspH family. [4Fe-4S] cluster serves as cofactor.

The catalysed reaction is isopentenyl diphosphate + 2 oxidized [2Fe-2S]-[ferredoxin] + H2O = (2E)-4-hydroxy-3-methylbut-2-enyl diphosphate + 2 reduced [2Fe-2S]-[ferredoxin] + 2 H(+). It carries out the reaction dimethylallyl diphosphate + 2 oxidized [2Fe-2S]-[ferredoxin] + H2O = (2E)-4-hydroxy-3-methylbut-2-enyl diphosphate + 2 reduced [2Fe-2S]-[ferredoxin] + 2 H(+). It functions in the pathway isoprenoid biosynthesis; dimethylallyl diphosphate biosynthesis; dimethylallyl diphosphate from (2E)-4-hydroxy-3-methylbutenyl diphosphate: step 1/1. The protein operates within isoprenoid biosynthesis; isopentenyl diphosphate biosynthesis via DXP pathway; isopentenyl diphosphate from 1-deoxy-D-xylulose 5-phosphate: step 6/6. Its function is as follows. Catalyzes the conversion of 1-hydroxy-2-methyl-2-(E)-butenyl 4-diphosphate (HMBPP) into a mixture of isopentenyl diphosphate (IPP) and dimethylallyl diphosphate (DMAPP). Acts in the terminal step of the DOXP/MEP pathway for isoprenoid precursor biosynthesis. In Nautilia profundicola (strain ATCC BAA-1463 / DSM 18972 / AmH), this protein is 4-hydroxy-3-methylbut-2-enyl diphosphate reductase.